Reading from the N-terminus, the 165-residue chain is Copper-resistant cuproprotein CopI (165 aa).

The N-terminal stretch at 1-23 (MKNRILRPALLCVAALFATTAQA) is a signal peptide. Positions 25 to 42 (AGHDHGSAHAGAHAHDAD) are enriched in basic and acidic residues. A disordered region spans residues 25–50 (AGHDHGSAHAGAHAHDADTPYGRPGD). Positions 93, 148, 153, and 158 each coordinate Cu(2+).

The protein belongs to the CopI family. As to quaternary structure, monomer.

The protein localises to the periplasm. Its function is as follows. Involved in copper tolerance. Required for copper resistance under both aerobic and anaerobic photosynthetic growth conditions. Binds copper. Could be an important defense against copper in the periplasm and may protect not only c type cytochromes but also other proteins with cysteine residues from copper ions that may catalyze nonnative disulfide bond formation. This is Copper-resistant cuproprotein CopI from Rubrivivax gelatinosus (Rhodocyclus gelatinosus).